The chain runs to 695 residues: Elongation factor G (695 aa).

A tr-type G domain is found at 8 to 282 (KDTRNIGIMA…AIVDYMPAPI (275 aa)). Residues 17 to 24 (AHIDAGKT), 81 to 85 (DTPGH), and 135 to 138 (NKMD) contribute to the GTP site. The tract at residues 285 to 304 (PDIKGVDPQTDEPTTRKSSD) is disordered.

It belongs to the TRAFAC class translation factor GTPase superfamily. Classic translation factor GTPase family. EF-G/EF-2 subfamily.

The protein localises to the cytoplasm. In terms of biological role, catalyzes the GTP-dependent ribosomal translocation step during translation elongation. During this step, the ribosome changes from the pre-translocational (PRE) to the post-translocational (POST) state as the newly formed A-site-bound peptidyl-tRNA and P-site-bound deacylated tRNA move to the P and E sites, respectively. Catalyzes the coordinated movement of the two tRNA molecules, the mRNA and conformational changes in the ribosome. The chain is Elongation factor G from Finegoldia magna (strain ATCC 29328 / DSM 20472 / WAL 2508) (Peptostreptococcus magnus).